The sequence spans 487 residues: Serralysin (487 aa).

A propeptide spanning residues 1 to 16 (MQSTKKAIEITESNFA) is cleaved from the precursor. His-192 provides a ligand contact to Zn(2+). Glu-193 is a catalytic residue. Positions 196, 202, and 232 each coordinate Zn(2+). Residues Arg-269, Gly-271, Thr-273, Asp-301, Gly-303, Gly-304, Asp-306, Thr-343, Glu-345, Gly-350, Gly-352, Asp-354, Asn-359, Ala-361, Asn-363, Gly-367, Gly-368, Ala-369, Asp-372, Gly-376, Gly-377, Gly-378, Gly-379, Asp-381, Gly-385, Gly-386, Ala-387, Gly-388, Asp-390, Asp-399, Asp-406, and Asp-416 each contribute to the Ca(2+) site. 2 Hemolysin-type calcium-binding repeats span residues 348–365 (IGGS…NNVL) and 366–383 (KGGA…ADEL).

Belongs to the peptidase M10B family. Requires Ca(2+) as cofactor. The cofactor is Zn(2+).

It is found in the secreted. The enzyme catalyses Preferential cleavage of bonds with hydrophobic residues in P1'.. Functionally, naturally present in the silkworm intestine and allows the emerging moth to dissolve its cocoon. In Serratia marcescens (strain ATCC 21074 / E-15), this protein is Serralysin.